A 711-amino-acid polypeptide reads, in one-letter code: Hydroperoxide isomerase ALOXE3 (711 aa).

Residues Ala2 to Arg119 form the PLAT domain. The Lipoxygenase domain occupies Thr120–Ile711. Fe cation contacts are provided by His408, His413, His588, Asn592, and Ile711.

The protein belongs to the lipoxygenase family. Fe cation serves as cofactor. As to expression, predominantly expressed in skin.

It is found in the cytoplasm. The catalysed reaction is a hydroperoxyeicosatetraenoate = a hydroxy-epoxy-eicosatetraenoate. It catalyses the reaction (12R)-hydroperoxy-(5Z,8Z,10E,14Z)-eicosatetraenoate = (8R)-hydroxy-(11R,12R)-epoxy-(5Z,9E,14Z)-eicosatrienoate. It carries out the reaction (12S)-hydroperoxy-(5Z,8Z,10E,14Z)-eicosatetraenoate = (8R)-hydroxy-(11S,12S)-epoxy-(5Z,9E,14Z)-eicosatrienoate. The enzyme catalyses (12S)-hydroperoxy-(5Z,8Z,10E,14Z)-eicosatetraenoate = (10R)-hydroxy-(11S,12S)-epoxy-(5Z,8Z,14Z)-eicosatrienoate. The catalysed reaction is (15S)-hydroperoxy-(5Z,8Z,11Z,13E)-eicosatetraenoate = (13R)-hydroxy-(14S,15S)-epoxy-(5Z,8Z,11Z)-eicosatrienoate. It catalyses the reaction (5S)-hydroperoxy-(6E,8Z,11Z,14Z)-eicosatetraenoate = 7R-hydroxy-5S,6S-epoxy-(8Z,11Z,14Z)-eicosatrienoate. It carries out the reaction (13S)-hydroperoxy-(9Z,11E)-octadecadienoate = 11-hydroxy-(12S,13S)-epoxy-(9Z)-octadecenoate. The enzyme catalyses N-[omega-(9R)-hydroperoxy-(10E,12Z)-octadecadienoyloxy]acyl-beta-D-glucosyl-(1&lt;-&gt;1)-octadecasphing-4E-enine = a N-[omega-(9R,10R)-epoxy-(13R)-hydroxy-(11E)-octadecenoyloxy]acyl-beta-D-glucosyl-(1&lt;-&gt;1)-sphing-4E-enine. The catalysed reaction is a N-[omega-(9R)-hydroperoxy-(10E,12Z)-octadecadienoyloxy]-acylsphin-4E-enine = a N-[omega-(9R,10R)-epoxy-(13R)-hydroxy-(11E)-octadecenoyloxy]-acylsphing-4E-enine. It catalyses the reaction a hydroperoxyeicosatetraenoate = an oxoeicosatetraenoate + H2O. It carries out the reaction (12R)-hydroperoxy-(5Z,8Z,10E,14Z)-eicosatetraenoate = 12-oxo-(5Z,8Z,10E,14Z)-eicosatetraenoate + H2O. The enzyme catalyses (12S)-hydroperoxy-(5Z,8Z,10E,14Z)-eicosatetraenoate = 12-oxo-(5Z,8Z,10E,14Z)-eicosatetraenoate + H2O. The catalysed reaction is (15S)-hydroperoxy-(5Z,8Z,11Z,13E)-eicosatetraenoate = 15-oxo-(5Z,8Z,11Z,13E)-eicosatetraenoate + H2O. It catalyses the reaction (13S)-hydroperoxy-(9Z,11E)-octadecadienoate = 13-oxo-(9Z,11E)-octadecadienoate + H2O. It carries out the reaction (8S)-hydroperoxy-(5Z,9E,11Z,14Z)-eicosatetraenoate = (10R)-hydroxy-(8S,9S)-epoxy-(5Z,11Z,14Z)-eicosatrienoate. The enzyme catalyses (8R)-hydroperoxy-(5Z,9E,11Z,14Z)-eicosatetraenoate = 8-oxo-(5Z,9E,11Z,14Z)-eicosatetraenoate + H2O. The catalysed reaction is (8S)-hydroperoxy-(5Z,9E,11Z,14Z)-eicosatetraenoate = 8-oxo-(5Z,9E,11Z,14Z)-eicosatetraenoate + H2O. It functions in the pathway lipid metabolism; hydroperoxy eicosatetraenoic acid biosynthesis. Its pathway is lipid metabolism; sphingolipid metabolism. Its activity is regulated as follows. Lipoxygenase activity is activated by 13(S)-HPODE leading to an active free ferric enzyme. The lipoxygenase and hydroperoxide isomerase activities are in competition and are reciprocally regulated by oxygen. The oxygen reacts with an epoxyallylic radical intermediate leading to an epoxyallylic peroxyl radical, which, due to its limited reactivity within the enzyme active site, it dissociates and leaves the enzyme in the activated free ferric state. Functionally, non-heme iron-containing lipoxygenase which is atypical in that it displays a prominent hydroperoxide isomerase activity and a reduced lipoxygenases activity. The hydroperoxide isomerase activity catalyzes the isomerization of hydroperoxides, derived from arachidonic and linoleic acid by ALOX12B, into hepoxilin-type epoxyalcohols and ketones. In presence of oxygen, oxygenates polyunsaturated fatty acids, including arachidonic acid, to produce fatty acid hydroperoxides. In the skin, acts downstream of ALOX12B on the linoleate moiety of esterified omega-hydroxyacyl-sphingosine (EOS) ceramides to produce an epoxy-ketone derivative, a crucial step in the conjugation of omega-hydroxyceramide to membrane proteins. Therefore plays a crucial role in the synthesis of corneocytes lipid envelope and the establishment of the skin barrier to water loss. In parallel, it may have a signaling function in barrier formation through the production of hepoxilins metabolites. Also plays a role in adipocyte differentiation through hepoxilin A3 and hepoxilin B3 production which in turn activate PPARG. Through the production of hepoxilins in the spinal cord, it may regulate inflammatory tactile allodynia. The sequence is that of Hydroperoxide isomerase ALOXE3 from Homo sapiens (Human).